The sequence spans 196 residues: MAIDVKAIEEHIRGILIALGDNPEREGLKNTPKRVAKMYEEVFKGMCYSNDEIAEMFNVTFEDDLCINDNENDMVFMKEIEIFSHCEHHLALMYNMKVAIAYIPKKKIIGLSKIARIADMVGRRLQLQERIGSDIAEILQKVTDSEDVAVIIEGEHGCMTTRGIKKPGTKTITTTLRGKFNTDPIVSNKLMMLYTK.

3 residues coordinate Zn(2+): Cys86, His89, and Cys158.

The protein belongs to the GTP cyclohydrolase I family. In terms of assembly, toroid-shaped homodecamer, composed of two pentamers of five dimers.

It carries out the reaction GTP + H2O = 7,8-dihydroneopterin 3'-triphosphate + formate + H(+). The protein operates within cofactor biosynthesis; 7,8-dihydroneopterin triphosphate biosynthesis; 7,8-dihydroneopterin triphosphate from GTP: step 1/1. This chain is GTP cyclohydrolase 1, found in Clostridium botulinum (strain Langeland / NCTC 10281 / Type F).